A 410-amino-acid chain; its full sequence is MPRFFARHAATLFFPMALILYDFAAYLSTDLIQPGIINVVRDFNADVSLAPAAVSLYLAGGMALQWLLGPLSDRIGRKPVLITGALIFTLACAATMFTTSMTQFLIARAIQGTSICFIATVGYVTVQEAFGQTKGIKLMAIITSIVLIAPIIGPLSGAALMHFVHWKVLFAIIAVMGFISFVGLLLAMPETVKRGAVPFSAKSVLRDFRNVFCNRLFLFGAATISLSYIPMMSWVAVSPVILIDAGGLTTSQFAWTQVPVFGAVIVANAIVARFVKDPTEPRFIWRAVPIQLVGLALLIIGNLLSPHVWLWSVLGTSLYAFGIGLIFPTLFRFTLFSNNLPKGTVSASLNMVILMVMSVSVEIGRWLWFNGGRLPFHLLAVVAGVIVVFTLAGLLNRVRQHQAAELAEEQ.

At 1 to 11 (MPRFFARHAAT) the chain is on the cytoplasmic side. The helical transmembrane segment at 12–32 (LFFPMALILYDFAAYLSTDLI) threads the bilayer. At 33–48 (QPGIINVVRDFNADVS) the chain is on the periplasmic side. The chain crosses the membrane as a helical span at residues 49-69 (LAPAAVSLYLAGGMALQWLLG). Residues 70-78 (PLSDRIGRK) lie on the Cytoplasmic side of the membrane. Residues 79-99 (PVLITGALIFTLACAATMFTT) form a helical membrane-spanning segment. Residues 100-103 (SMTQ) are Periplasmic-facing. The helical transmembrane segment at 104–124 (FLIARAIQGTSICFIATVGYV) threads the bilayer. The Cytoplasmic portion of the chain corresponds to 125–140 (TVQEAFGQTKGIKLMA). Residues 141–161 (IITSIVLIAPIIGPLSGAALM) form a helical membrane-spanning segment. The Periplasmic segment spans residues 162-167 (HFVHWK). Residues 168 to 188 (VLFAIIAVMGFISFVGLLLAM) traverse the membrane as a helical segment. Over 189-216 (PETVKRGAVPFSAKSVLRDFRNVFCNRL) the chain is Cytoplasmic. A helical transmembrane segment spans residues 217–237 (FLFGAATISLSYIPMMSWVAV). At 238-251 (SPVILIDAGGLTTS) the chain is on the periplasmic side. Residues 252-272 (QFAWTQVPVFGAVIVANAIVA) form a helical membrane-spanning segment. Residues 273–282 (RFVKDPTEPR) are Cytoplasmic-facing. Residues 283 to 303 (FIWRAVPIQLVGLALLIIGNL) form a helical membrane-spanning segment. The Periplasmic portion of the chain corresponds to 304–307 (LSPH). A helical membrane pass occupies residues 308–328 (VWLWSVLGTSLYAFGIGLIFP). Over 329-348 (TLFRFTLFSNNLPKGTVSAS) the chain is Cytoplasmic. A helical membrane pass occupies residues 349 to 369 (LNMVILMVMSVSVEIGRWLWF). The Periplasmic portion of the chain corresponds to 370–373 (NGGR). The chain crosses the membrane as a helical span at residues 374 to 394 (LPFHLLAVVAGVIVVFTLAGL). Over 395–410 (LNRVRQHQAAELAEEQ) the chain is Cytoplasmic.

Belongs to the major facilitator superfamily.

Its subcellular location is the cell inner membrane. Functionally, proton-dependent efflux pump. Confers resistance to a broad spectrum of chemically unrelated substrates. This chain is Multidrug resistance protein MdtM (mdtM), found in Escherichia coli O157:H7.